A 219-amino-acid polypeptide reads, in one-letter code: Probable 3-beta-hydroxysteroid-Delta(8),Delta(7)-isomerase (219 aa).

Helical transmembrane passes span 29–49 (ILVP…LISG), 62–82 (LMCW…TFVF), 119–139 (VEGI…YAIA), and 181–201 (FWAY…MIAI). The 143-residue stretch at 58–200 (TDRWLMCWWA…SWVVIPTMIA (143 aa)) folds into the EXPERA domain.

This sequence belongs to the EBP family.

The protein localises to the endoplasmic reticulum membrane. It catalyses the reaction lathosterol = 5alpha-cholest-8-en-3beta-ol. Its pathway is steroid biosynthesis; sterol biosynthesis. In terms of biological role, catalyzes the conversion of Delta(8)-sterols to their corresponding Delta(7)-isomers. This is Probable 3-beta-hydroxysteroid-Delta(8),Delta(7)-isomerase from Oryza sativa subsp. japonica (Rice).